Reading from the N-terminus, the 865-residue chain is Protein translocase subunit SecA (865 aa).

Residues glutamine 93, 111 to 115 (GEGKT), and aspartate 501 each bind ATP. The Zn(2+) site is built by cysteine 841, cysteine 843, cysteine 852, and cysteine 853.

Belongs to the SecA family. In terms of assembly, monomer and homodimer. Part of the essential Sec protein translocation apparatus which comprises SecA, SecYEG and auxiliary proteins SecDF-YajC and YidC. The cofactor is Zn(2+).

It is found in the cell inner membrane. It localises to the cytoplasm. It carries out the reaction ATP + H2O + cellular proteinSide 1 = ADP + phosphate + cellular proteinSide 2.. Functionally, part of the Sec protein translocase complex. Interacts with the SecYEG preprotein conducting channel. Has a central role in coupling the hydrolysis of ATP to the transfer of proteins into and across the cell membrane, serving as an ATP-driven molecular motor driving the stepwise translocation of polypeptide chains across the membrane. The chain is Protein translocase subunit SecA from Helicobacter pylori (strain P12).